Here is a 289-residue protein sequence, read N- to C-terminus: UPF0761 membrane protein ESA_04062 (289 aa).

Helical transmembrane passes span Leu44 to Phe64, Val104 to Leu124, Phe140 to Ile160, Ile183 to Thr203, Leu215 to Phe235, and Val244 to Leu264.

Belongs to the UPF0761 family.

The protein localises to the cell inner membrane. The protein is UPF0761 membrane protein ESA_04062 of Cronobacter sakazakii (strain ATCC BAA-894) (Enterobacter sakazakii).